A 520-amino-acid chain; its full sequence is Glutamyl-tRNA(Gln) amidotransferase subunit A (520 aa).

Residues Lys80 and Ser155 each act as charge relay system in the active site. The active-site Acyl-ester intermediate is Ser179.

This sequence belongs to the amidase family. GatA subfamily. In terms of assembly, heterotrimer of A, B and C subunits.

It catalyses the reaction L-glutamyl-tRNA(Gln) + L-glutamine + ATP + H2O = L-glutaminyl-tRNA(Gln) + L-glutamate + ADP + phosphate + H(+). Allows the formation of correctly charged Gln-tRNA(Gln) through the transamidation of misacylated Glu-tRNA(Gln) in organisms which lack glutaminyl-tRNA synthetase. The reaction takes place in the presence of glutamine and ATP through an activated gamma-phospho-Glu-tRNA(Gln). In Renibacterium salmoninarum (strain ATCC 33209 / DSM 20767 / JCM 11484 / NBRC 15589 / NCIMB 2235), this protein is Glutamyl-tRNA(Gln) amidotransferase subunit A.